The primary structure comprises 694 residues: Heat shock protein homolog SSE1 (694 aa).

The segment at 671–694 is disordered; that stretch reads AQRSADSEAKKDATPEGDAQMDLD. The span at 675–684 shows a compositional bias: basic and acidic residues; that stretch reads ADSEAKKDAT.

The protein belongs to the heat shock protein 70 family.

It localises to the cytoplasm. The sequence is that of Heat shock protein homolog SSE1 (SSE1) from Candida glabrata (strain ATCC 2001 / BCRC 20586 / JCM 3761 / NBRC 0622 / NRRL Y-65 / CBS 138) (Yeast).